We begin with the raw amino-acid sequence, 169 residues long: Putative outer membrane protein BBA03 (169 aa).

The protein localises to the cell outer membrane. This chain is Putative outer membrane protein BBA03, found in Borreliella burgdorferi (strain ATCC 35210 / DSM 4680 / CIP 102532 / B31) (Borrelia burgdorferi).